We begin with the raw amino-acid sequence, 56 residues long: Trypsin inhibitor 1 (56 aa).

Residues 1–25 (MATTMAKLITLVVLAILAFVEVSVS) form the signal peptide. Residues 26-39 (GYKTSISTITIEDN) constitute a propeptide that is removed on maturation. A cross-link (cyclopeptide (Gly-Asp)) is located at residues 40–53 (GRCTKSIPPICFPD). Cysteine 42 and cysteine 50 are oxidised to a cystine. Residues 54-56 (GRP) constitute a propeptide that is removed on maturation.

In terms of processing, this is a cyclic peptide.

Its function is as follows. Inhibits trypsin, cathepsin G, elastase, chymotrypsin and thrombin. Does not inhibit factor Xa. This Helianthus annuus (Common sunflower) protein is Trypsin inhibitor 1.